We begin with the raw amino-acid sequence, 289 residues long: tRNA pseudouridine synthase B (289 aa).

Catalysis depends on Asp-38, which acts as the Nucleophile.

Belongs to the pseudouridine synthase TruB family. Type 1 subfamily.

The enzyme catalyses uridine(55) in tRNA = pseudouridine(55) in tRNA. Functionally, responsible for synthesis of pseudouridine from uracil-55 in the psi GC loop of transfer RNAs. The polypeptide is tRNA pseudouridine synthase B (Clostridium novyi (strain NT)).